Consider the following 237-residue polypeptide: Ribonuclease PH (237 aa).

Residues arginine 86 and 124–126 (GTR) each bind phosphate.

It belongs to the RNase PH family. As to quaternary structure, homohexameric ring arranged as a trimer of dimers.

The catalysed reaction is tRNA(n+1) + phosphate = tRNA(n) + a ribonucleoside 5'-diphosphate. Phosphorolytic 3'-5' exoribonuclease that plays an important role in tRNA 3'-end maturation. Removes nucleotide residues following the 3'-CCA terminus of tRNAs; can also add nucleotides to the ends of RNA molecules by using nucleoside diphosphates as substrates, but this may not be physiologically important. Probably plays a role in initiation of 16S rRNA degradation (leading to ribosome degradation) during starvation. This Shewanella frigidimarina (strain NCIMB 400) protein is Ribonuclease PH.